The primary structure comprises 46 residues: MQVLSSLKTAKTRHPDCKIVSRRGRLYVICKSNPRFKAVQGKKKRR.

Belongs to the bacterial ribosomal protein bL36 family.

This chain is Large ribosomal subunit protein bL36, found in Photorhabdus laumondii subsp. laumondii (strain DSM 15139 / CIP 105565 / TT01) (Photorhabdus luminescens subsp. laumondii).